The primary structure comprises 960 residues: RNA polymerase II subunit A C-terminal domain phosphatase (960 aa).

M1 is modified (N-acetylmethionine). The FCP1 homology domain maps to 178-341 (HRNRKLVLMV…PPAARETQAR (164 aa)). The tract at residues 331 to 580 (APPAARETQA…EEDTDDDDHL (250 aa)) is disordered. A compositionally biased stretch (polar residues) spans 439–448 (PGVQPTQGDA). Residues 453-463 (LDFDLSSDSES) are compositionally biased toward acidic residues. At S530 the chain carries Phosphoserine. The span at 547–556 (ESQNSEQSGV) shows a compositional bias: polar residues. A compositionally biased stretch (acidic residues) spans 566–578 (VGEEEEEDTDDDD). The region spanning 619 to 718 (LKSKVLADVA…DKVEEQLFPL (100 aa)) is the BRCT domain. Residues S664 and S730 each carry the phosphoserine modification. Position 770 is an N6-acetyllysine (K770). Disordered stretches follow at residues 770-834 (KLIR…MSEA) and 854-948 (DILG…ADEM). S830, S860, and S863 each carry phosphoserine. Residues 854–864 (DILGEGSDDSD) show a composition bias toward acidic residues. Residues 865-881 (IEKKKPEDQDNEQERAP) show a composition bias toward basic and acidic residues. Acidic residues predominate over residues 934-947 (SNDDEEGSSSEADE).

Homodimer. Interacts with GTF2F1. Interacts with WDR77, SNRPB and SNRNP70. Phosphorylated. In the presence of TFIIF, the phosphorylated form has an increased CTD phosphatase activity. The phosphorylation is required for the physical interaction with GTF2F1.

The protein localises to the nucleus. Its subcellular location is the cytoplasm. It is found in the cytoskeleton. The protein resides in the microtubule organizing center. It localises to the centrosome. The protein localises to the spindle. Its subcellular location is the spindle pole. It is found in the midbody. It catalyses the reaction O-phospho-L-seryl-[protein] + H2O = L-seryl-[protein] + phosphate. The enzyme catalyses O-phospho-L-threonyl-[protein] + H2O = L-threonyl-[protein] + phosphate. Its function is as follows. Processively dephosphorylates 'Ser-2' and 'Ser-5' of the heptad repeats YSPTSPS in the C-terminal domain of the largest RNA polymerase II subunit. This promotes the activity of RNA polymerase II. Plays a role in the exit from mitosis by dephosphorylating crucial mitotic substrates (USP44, CDC20 and WEE1) that are required for M-phase-promoting factor (MPF)/CDK1 inactivation. The sequence is that of RNA polymerase II subunit A C-terminal domain phosphatase (Ctdp1) from Mus musculus (Mouse).